The chain runs to 154 residues: MNTYEGKLQSKNSKIAIIISRFNSFINKNLLDGAIDSLKRIGRLKSENISIFWVPGVCEIPIIVNFLSKQNKYNGLITLGTVIQGKTFHHELISKDFNNIIFNISIKKNIPISVGVLYTRNINQAIERSGTKLGNKGSDAALSVLEMINLLKII.

5-amino-6-(D-ribitylamino)uracil is bound by residues Phe22, 57-59 (VCE), and 81-83 (TVI). 86-87 (KT) contributes to the (2S)-2-hydroxy-3-oxobutyl phosphate binding site. His89 acts as the Proton donor in catalysis. Val114 provides a ligand contact to 5-amino-6-(D-ribitylamino)uracil. Residue Arg128 coordinates (2S)-2-hydroxy-3-oxobutyl phosphate.

It belongs to the DMRL synthase family. As to quaternary structure, forms an icosahedral capsid composed of 60 subunits, arranged as a dodecamer of pentamers.

It carries out the reaction (2S)-2-hydroxy-3-oxobutyl phosphate + 5-amino-6-(D-ribitylamino)uracil = 6,7-dimethyl-8-(1-D-ribityl)lumazine + phosphate + 2 H2O + H(+). It participates in cofactor biosynthesis; riboflavin biosynthesis; riboflavin from 2-hydroxy-3-oxobutyl phosphate and 5-amino-6-(D-ribitylamino)uracil: step 1/2. In terms of biological role, catalyzes the formation of 6,7-dimethyl-8-ribityllumazine by condensation of 5-amino-6-(D-ribitylamino)uracil with 3,4-dihydroxy-2-butanone 4-phosphate. This is the penultimate step in the biosynthesis of riboflavin. This is 6,7-dimethyl-8-ribityllumazine synthase from Wigglesworthia glossinidia brevipalpis.